We begin with the raw amino-acid sequence, 156 residues long: Envelope glycoprotein L (156 aa).

An N-terminal signal peptide occupies residues 1 to 16; it reads MSPLVAVLVFFSAALG. The gL alphaherpesvirus-type domain maps to 50–156; it reads ELEWDDEDHP…LRYNGGPPAE (107 aa). A disulfide bridge connects residues Cys-71 and Cys-95.

It belongs to the herpesviridae glycoprotein L (gL) family. Alphaherpesvirinae gL subfamily. As to quaternary structure, interacts with glycoprotein H (gH); this interaction is necessary for the correct processing and cell surface expression of gH. The heterodimer gH/gL seems to interact with gB trimers during fusion. O-glycosylated, and sialylated.

It localises to the virion membrane. Its subcellular location is the host cell membrane. It is found in the host Golgi apparatus. The protein localises to the host trans-Golgi network. The heterodimer glycoprotein H-glycoprotein L is required for the fusion of viral and plasma membranes leading to virus entry into the host cell. Acts as a functional inhibitor of gH and maintains gH in an inhibited form. Upon binding to host integrins, gL dissociates from gH leading to activation of the viral fusion glycoproteins gB and gH. The chain is Envelope glycoprotein L from Suid herpesvirus 1 (strain Indiana-Funkhauser / Becker) (SuHV-1).